Reading from the N-terminus, the 149-residue chain is Squidulin (149 aa).

At Ala-1 the chain carries N-acetylalanine. EF-hand domains follow at residues 7–42 (KQIA…LGRT), 43–78 (PSDA…QMGP), 80–115 (DPEK…FSDE), and 117–149 (LTSE…MTPK). Asp-20, Asp-22, Asp-24, Gln-26, Glu-31, Asp-56, Asp-58, Asn-60, Thr-62, Glu-67, Asp-93, Asp-95, Asn-97, Glu-104, Asp-130, Asp-132, Asp-134, Met-136, and Glu-141 together coordinate Ca(2+).

Belongs to the calmodulin family.

Not known. This protein has four functional calcium-binding sites. The protein is Squidulin of Doryteuthis pealeii (Longfin inshore squid).